The following is a 40-amino-acid chain: MISDVQLAIFSNVLGVFLFLLVVAYHYINANTGKPSAKAK.

Residues 1–4 (MISD) are Lumenal-facing. A helical transmembrane segment spans residues 5-25 (VQLAIFSNVLGVFLFLLVVAY). Topologically, residues 26 to 40 (HYINANTGKPSAKAK) are cytoplasmic.

The protein belongs to the OST4 family. Component of the oligosaccharyltransferase (OST) complex.

The protein localises to the endoplasmic reticulum membrane. Its function is as follows. Subunit of the oligosaccharyl transferase (OST) complex that catalyzes the initial transfer of a defined glycan (Glc(3)Man(9)GlcNAc(2) in eukaryotes) from the lipid carrier dolichol-pyrophosphate to an asparagine residue within an Asn-X-Ser/Thr consensus motif in nascent polypeptide chains, the first step in protein N-glycosylation. N-glycosylation occurs cotranslationally and the complex associates with the Sec61 complex at the channel-forming translocon complex that mediates protein translocation across the endoplasmic reticulum (ER). All subunits are required for a maximal enzyme activity. The polypeptide is Dolichyl-diphosphooligosaccharide--protein glycosyltransferase subunit 4 (Drosophila yakuba (Fruit fly)).